The following is a 441-amino-acid chain: Ribulose bisphosphate carboxylase large chain (441 aa).

Asparagine 89 and threonine 139 together coordinate substrate. Lysine 141 serves as the catalytic Proton acceptor. A substrate-binding site is contributed by lysine 143. Mg(2+)-binding residues include lysine 167, aspartate 169, and glutamate 170. An N6-carboxylysine modification is found at lysine 167. The active-site Proton acceptor is histidine 260. Residues residue 261, histidine 293, and serine 345 each contribute to the substrate site.

Belongs to the RuBisCO large chain family. Type I subfamily. In terms of assembly, heterohexadecamer of 8 large chains and 8 small chains; disulfide-linked. The disulfide link is formed within the large subunit homodimers. Mg(2+) serves as cofactor. The disulfide bond which can form in the large chain dimeric partners within the hexadecamer appears to be associated with oxidative stress and protein turnover.

The protein resides in the plastid. The protein localises to the chloroplast. The enzyme catalyses 2 (2R)-3-phosphoglycerate + 2 H(+) = D-ribulose 1,5-bisphosphate + CO2 + H2O. The catalysed reaction is D-ribulose 1,5-bisphosphate + O2 = 2-phosphoglycolate + (2R)-3-phosphoglycerate + 2 H(+). Its function is as follows. RuBisCO catalyzes two reactions: the carboxylation of D-ribulose 1,5-bisphosphate, the primary event in carbon dioxide fixation, as well as the oxidative fragmentation of the pentose substrate in the photorespiration process. Both reactions occur simultaneously and in competition at the same active site. The sequence is that of Ribulose bisphosphate carboxylase large chain from Apocynum cannabinum (Hemp dogbane).